Consider the following 68-residue polypeptide: DNA-directed RNA polymerase subunit Rpo10 (68 aa).

Positions 7, 10, 44, and 45 each coordinate Zn(2+).

The protein belongs to the archaeal Rpo10/eukaryotic RPB10 RNA polymerase subunit family. As to quaternary structure, part of the RNA polymerase complex. Zn(2+) is required as a cofactor.

It is found in the cytoplasm. It carries out the reaction RNA(n) + a ribonucleoside 5'-triphosphate = RNA(n+1) + diphosphate. Functionally, DNA-dependent RNA polymerase (RNAP) catalyzes the transcription of DNA into RNA using the four ribonucleoside triphosphates as substrates. The chain is DNA-directed RNA polymerase subunit Rpo10 from Methanococcus maripaludis (strain C7 / ATCC BAA-1331).